A 455-amino-acid chain; its full sequence is tRNA modification GTPase MnmE (455 aa).

(6S)-5-formyl-5,6,7,8-tetrahydrofolate contacts are provided by Arg23, Glu85, and Arg124. The 156-residue stretch at 220–375 folds into the TrmE-type G domain; that stretch reads GVSVVIAGKP…LQDAIFEAFI (156 aa). Asn230 is a binding site for K(+). GTP contacts are provided by residues 230–235, 249–255, and 274–277; these read NVGKSS, TSVPGTT, and DTAG. Mg(2+) is bound at residue Ser234. Thr249, Val251, and Thr254 together coordinate K(+). Thr255 is a binding site for Mg(2+). A (6S)-5-formyl-5,6,7,8-tetrahydrofolate-binding site is contributed by Lys455.

This sequence belongs to the TRAFAC class TrmE-Era-EngA-EngB-Septin-like GTPase superfamily. TrmE GTPase family. Homodimer. Heterotetramer of two MnmE and two MnmG subunits. It depends on K(+) as a cofactor.

The protein localises to the cytoplasm. In terms of biological role, exhibits a very high intrinsic GTPase hydrolysis rate. Involved in the addition of a carboxymethylaminomethyl (cmnm) group at the wobble position (U34) of certain tRNAs, forming tRNA-cmnm(5)s(2)U34. This is tRNA modification GTPase MnmE from Geotalea uraniireducens (strain Rf4) (Geobacter uraniireducens).